Consider the following 142-residue polypeptide: uncharacterized protein (142 aa).

This is an uncharacterized protein from Mycobacterium tuberculosis (strain CDC 1551 / Oshkosh).